We begin with the raw amino-acid sequence, 565 residues long: Proline--tRNA ligase (565 aa).

Belongs to the class-II aminoacyl-tRNA synthetase family. ProS type 1 subfamily. Homodimer.

The protein localises to the cytoplasm. It carries out the reaction tRNA(Pro) + L-proline + ATP = L-prolyl-tRNA(Pro) + AMP + diphosphate. In terms of biological role, catalyzes the attachment of proline to tRNA(Pro) in a two-step reaction: proline is first activated by ATP to form Pro-AMP and then transferred to the acceptor end of tRNA(Pro). As ProRS can inadvertently accommodate and process non-cognate amino acids such as alanine and cysteine, to avoid such errors it has two additional distinct editing activities against alanine. One activity is designated as 'pretransfer' editing and involves the tRNA(Pro)-independent hydrolysis of activated Ala-AMP. The other activity is designated 'posttransfer' editing and involves deacylation of mischarged Ala-tRNA(Pro). The misacylated Cys-tRNA(Pro) is not edited by ProRS. The chain is Proline--tRNA ligase from Lactobacillus delbrueckii subsp. bulgaricus (strain ATCC 11842 / DSM 20081 / BCRC 10696 / JCM 1002 / NBRC 13953 / NCIMB 11778 / NCTC 12712 / WDCM 00102 / Lb 14).